Consider the following 134-residue polypeptide: ATP synthase epsilon chain (134 aa).

This sequence belongs to the ATPase epsilon chain family. As to quaternary structure, F-type ATPases have 2 components, CF(1) - the catalytic core - and CF(0) - the membrane proton channel. CF(1) has five subunits: alpha(3), beta(3), gamma(1), delta(1), epsilon(1). CF(0) has three main subunits: a, b and c.

The protein localises to the cellular thylakoid membrane. Produces ATP from ADP in the presence of a proton gradient across the membrane. This is ATP synthase epsilon chain from Prochlorococcus marinus (strain MIT 9312).